The following is a 34-amino-acid chain: Photosystem II reaction center protein T (34 aa).

Residues 3–23 (ALVYTFLLVSTLGIIFFAIFF) traverse the membrane as a helical segment.

Belongs to the PsbT family. In terms of assembly, PSII is composed of 1 copy each of membrane proteins PsbA, PsbB, PsbC, PsbD, PsbE, PsbF, PsbH, PsbI, PsbJ, PsbK, PsbL, PsbM, PsbT, PsbY, PsbZ, Psb30/Ycf12, at least 3 peripheral proteins of the oxygen-evolving complex and a large number of cofactors. It forms dimeric complexes.

The protein localises to the plastid. It is found in the chloroplast thylakoid membrane. Found at the monomer-monomer interface of the photosystem II (PS II) dimer, plays a role in assembly and dimerization of PSII. PSII is a light-driven water plastoquinone oxidoreductase, using light energy to abstract electrons from H(2)O, generating a proton gradient subsequently used for ATP formation. This Solanum bulbocastanum (Wild potato) protein is Photosystem II reaction center protein T.